Consider the following 601-residue polypeptide: Putative ankyrin repeat protein R841 (601 aa).

ANK repeat units lie at residues 17–50, 54–86, 91–123, 165–197, 201–234, 238–269, 274–310, 314–349, 361–390, 397–427, 432–463, and 467–500; these read NNITSLMLAVSNYEIHDNYDTVKSLIDCGFDVNA, HGKSVLMYAINIDSDKNINVIKLLIDHGADVNH, QRSVLIHTCMYMEYGYNNKTISLLIDKGANINY, RENILMRIIKKLDNKYSITTIKLLLEHGINIDH, YGQTALMYACIYINGLKNIPIIKLLLEYGANINS, KGWSPLMSVFKNDIIDIKTIKFLVEKGAEINS, NETMLYVFCKKLSTRIYGQACVKIFDFLIKKGISIDN, KGYTPLMAFIIKISEYNEYTEKFIKLLLDYGANINS, VCCDVVSGSVSHCKIEIINTLIKYGADVNS, TILMNLRYSIHSENYITVLEILLRNGANPNI, YHKFPLLIDILNRGGELRIIKLMLQYNIDPNI, and IGNNALLFVAKHYKKNERFSFLKLLLTYGASYNC.

This is Putative ankyrin repeat protein R841 from Acanthamoeba polyphaga mimivirus (APMV).